The sequence spans 666 residues: Calmodulin-binding receptor kinase CaMRLK (666 aa).

The first 17 residues, 1-17, serve as a signal peptide directing secretion; it reads MFLKLFLLLSLVSFSHS. The Extracellular portion of the chain corresponds to 18 to 297; the sequence is DSSSTVSCPN…KTHRTNHTPL (280 aa). Residues N27, N45, N52, N68, N78, N89, N110, N126, N137, N148, N154, N189, N212, N229, and N261 are each glycosylated (N-linked (GlcNAc...) asparagine). 7 LRR repeats span residues 79–103, 105–127, 130–152, 153–177, 178–197, 198–224, and 226–246; these read LTRL…LWSM, GLVS…PVNG, LSAV…FTGF, TNLT…SLSG, LRHL…PISG, LKSL…NLNH, and QFLN…KYRK. A helical transmembrane segment spans residues 298–318; sequence VIGLSSSLGALIIVIFAAAII. The interval 319 to 337 is calmodulin binding; that stretch reads LIRRRMKSARTKSRWAISN. Over 319 to 666 the chain is Cytoplasmic; sequence LIRRRMKSAR…LLKDIRTVSR (348 aa). The Protein kinase domain occupies 395 to 661; the sequence is FGTESVISDG…QQVLGLLKDI (267 aa). Residues 401–409 and K423 contribute to the ATP site; that span reads ISDGTCGPL.

This sequence belongs to the protein kinase superfamily. Ser/Thr protein kinase family. Binds calmodulin (CaM) in a calcium-dependent manner. Interacts with CAM1, but not with CAM8. Mn(2+) is required as a cofactor. It depends on Mg(2+) as a cofactor. Calmodulin (CaM)-independent autophosphorylation. In terms of tissue distribution, expressed in reproductive and vegetative tissues, with higher levels in seedlings and flowers, but not in leaves.

It localises to the cell membrane. The catalysed reaction is L-seryl-[protein] + ATP = O-phospho-L-seryl-[protein] + ADP + H(+). It carries out the reaction L-threonyl-[protein] + ATP = O-phospho-L-threonyl-[protein] + ADP + H(+). With respect to regulation, not stimulated by calmodulin (CaM). Functionally, can phosphorylate the myelin basic protein in vitro. Required for endosperm development in embryos. Maybe involved in auxin and osmotic stress responses. The chain is Calmodulin-binding receptor kinase CaMRLK from Arabidopsis thaliana (Mouse-ear cress).